Reading from the N-terminus, the 130-residue chain is Small ribosomal subunit protein uS9 (130 aa).

This sequence belongs to the universal ribosomal protein uS9 family.

In Aromatoleum aromaticum (strain DSM 19018 / LMG 30748 / EbN1) (Azoarcus sp. (strain EbN1)), this protein is Small ribosomal subunit protein uS9.